Consider the following 199-residue polypeptide: Large ribosomal subunit protein bL25 (199 aa).

This sequence belongs to the bacterial ribosomal protein bL25 family. CTC subfamily. In terms of assembly, part of the 50S ribosomal subunit; part of the 5S rRNA/L5/L18/L25 subcomplex. Contacts the 5S rRNA. Binds to the 5S rRNA independently of L5 and L18.

In terms of biological role, this is one of the proteins that binds to the 5S RNA in the ribosome where it forms part of the central protuberance. The chain is Large ribosomal subunit protein bL25 from Chloroherpeton thalassium (strain ATCC 35110 / GB-78).